Here is a 1353-residue protein sequence, read N- to C-terminus: DNA-directed RNA polymerase subunit beta' (1353 aa).

A unknown region spans residues 1-117; that stretch reads MSDNRLFTSV…AFQKLNDLFK (117 aa). Residues 118–1353 form a DNA-directed RNA polymerase subunit beta' region; it reads LYNHFPSISS…SELTKKTNQN (1236 aa). Positions 189, 191, 203, and 206 each coordinate Zn(2+). Mg(2+) contacts are provided by Asp578, Asp580, and Asp582.

It belongs to the RNA polymerase beta' chain family. The RNAP catalytic core consists of 2 alpha, 1 beta, 1 beta' and 1 omega subunit. When a sigma factor is associated with the core the holoenzyme is formed, which can initiate transcription. Mg(2+) serves as cofactor. Requires Zn(2+) as cofactor.

It catalyses the reaction RNA(n) + a ribonucleoside 5'-triphosphate = RNA(n+1) + diphosphate. Its function is as follows. DNA-dependent RNA polymerase catalyzes the transcription of DNA into RNA using the four ribonucleoside triphosphates as substrates. The sequence is that of DNA-directed RNA polymerase subunit beta' from Aster yellows witches'-broom phytoplasma (strain AYWB).